Here is a 600-residue protein sequence, read N- to C-terminus: 1,8-cineole synthase 1, chloroplastic (600 aa).

Residues 1–31 (MATLRISSALIYQNTLTHHFRLRRPHRFVCK) constitute a chloroplast transit peptide. Asp-342 is a binding site for dimethylallyl diphosphate. Residues Asp-342 and Asp-346 each contribute to the Mg(2+) site. The DDXXD motif signature appears at 342–346 (DDIYD). Residues Glu-420, Arg-484, and Asn-487 each coordinate dimethylallyl diphosphate. Mg(2+) is bound by residues Asn-487, Thr-491, and Glu-495.

This sequence belongs to the terpene synthase family. Tpsb subfamily. Requires Mg(2+) as cofactor. Mn(2+) is required as a cofactor. In terms of tissue distribution, predominantly expressed in roots and at much lower levels in siliques. Not found in leaves, flowers or stems. Also detected in flowers in cv. Landsberg erecta. Not expressed in root apical meristem and elongation zone. Found in the vascular system of young roots and additionally in the cortex and epidermal cell layer of older roots.

It is found in the plastid. It localises to the chloroplast. It catalyses the reaction (2E)-geranyl diphosphate + H2O = 1,8-cineole + diphosphate. It functions in the pathway secondary metabolite biosynthesis; terpenoid biosynthesis. In terms of biological role, involved in monoterpene (C10) biosynthesis. The major product is 1,8-cineole (52%) followed by minor amounts of sabinene (14.5%), myrcene (13.3%), (-)-(1S)-beta-pinene (7.8%), (-)-(4S)-limonene (4.0%), (E)-beta-ocimene (2.7%), alpha-terpineol (2.4%), (-)-(1S)-alpha-pinene (1.9%), terpinolene (0.8%), and (+)-alpha-thujene (0.6%). The sequence is that of 1,8-cineole synthase 1, chloroplastic (TPS27) from Arabidopsis thaliana (Mouse-ear cress).